A 153-amino-acid chain; its full sequence is Adenosine 5'-monophosphoramidase HINT3 (153 aa).

Residues 20 to 130 (IFCRIANKQE…PASQLGFLSR (111 aa)) enclose the HIT domain. AMP is bound by residues 46–47 (DI) and 115–117 (HLH). Residues 113 to 117 (HLHLH) carry the Histidine triad motif motif. His115 (tele-AMP-histidine intermediate) is an active-site residue.

The protein belongs to the HINT family. As to quaternary structure, forms dimers to octamers and even larger oligomer.

Its subcellular location is the cytoplasm. The protein resides in the nucleus. The catalysed reaction is adenosine 5'-phosphoramidate + H2O = AMP + NH4(+). Functionally, exhibits adenosine 5'-monophosphoramidase activity, hydrolyzing purine nucleotide phosphoramidates with a single phosphate group such as adenosine 5'monophosphoramidate (AMP-NH2) to yield AMP and NH2. Hydrolyzes lysyl-AMP (AMP-N-epsilon-(N-alpha-acetyl lysine methyl ester)) generated by lysine tRNA ligase. The sequence is that of Adenosine 5'-monophosphoramidase HINT3 (hint3) from Xenopus tropicalis (Western clawed frog).